A 601-amino-acid chain; its full sequence is MITKVSDFLFRTFREDPATTESRGYGFLLRAGYIRQTGSGIFSWMPLGLKVRHKIENIIRYEMRQVNAIEVLFPALFSADLFKQSGRWSEYGDDIFRLKDRRQGDYLLAPTHEEAFTQMMKEICTSYRDLPRTVYQIQDKYRDELRPRAGLLRSREFSMKDAYSFDLDEKGLRQSYEAQKRAYKKIFDRLEIDYVIVKANAGAMGGSVSEEFLHPTEMGDDTFVVTADGSAFNAEVYVTLPGPAIDYSNAPEAEDCETPGVISIPDLVNHMNSSGRFIGRVIESSDCLKCLLFRIEYAEVQNGNPGNLVVKKILERGFEYIGFLVPGDRNVDLKRAQVALSPLTIEPADNRVFECNPSFVRGSIGPGLSGVFYCADPRVSSGSSWIIGANRPGVHRIGAIAGRDFSFDCTLDVSSIKTGDKSEWGPVTVKRGIEIGHLFQLGLKYSNALGLKVLDKDGYNKAVFMGSYGIGVSRLFALIAEKNCDERGLKWPAVLAPFDLHVVLLSSARAELIDSLTDCGLDVLVDDRRVSPGVKFTDAQLIGVPKIIVIGDKTRGEDVEVWDRANDQRTVLPLKEMIQGVIQRSDTGGCTERCTGVCPTR.

Belongs to the class-II aminoacyl-tRNA synthetase family. ProS type 1 subfamily. Homodimer.

It localises to the cytoplasm. The catalysed reaction is tRNA(Pro) + L-proline + ATP = L-prolyl-tRNA(Pro) + AMP + diphosphate. Functionally, catalyzes the attachment of proline to tRNA(Pro) in a two-step reaction: proline is first activated by ATP to form Pro-AMP and then transferred to the acceptor end of tRNA(Pro). As ProRS can inadvertently accommodate and process non-cognate amino acids such as alanine and cysteine, to avoid such errors it has two additional distinct editing activities against alanine. One activity is designated as 'pretransfer' editing and involves the tRNA(Pro)-independent hydrolysis of activated Ala-AMP. The other activity is designated 'posttransfer' editing and involves deacylation of mischarged Ala-tRNA(Pro). The misacylated Cys-tRNA(Pro) is not edited by ProRS. In Tropheryma whipplei (strain TW08/27) (Whipple's bacillus), this protein is Proline--tRNA ligase.